We begin with the raw amino-acid sequence, 116 residues long: Large ribosomal subunit protein bL19 (116 aa).

The protein belongs to the bacterial ribosomal protein bL19 family.

This protein is located at the 30S-50S ribosomal subunit interface and may play a role in the structure and function of the aminoacyl-tRNA binding site. The sequence is that of Large ribosomal subunit protein bL19 (rplS) from Streptomyces lividans.